The sequence spans 317 residues: ADP-L-glycero-D-manno-heptose-6-epimerase (317 aa).

NADP(+) contacts are provided by residues phenylalanine 10–isoleucine 11, aspartate 31–aspartate 32, lysine 38, lysine 53, glutamine 75–serine 79, and asparagine 92. Catalysis depends on tyrosine 139, which acts as the Proton acceptor. Position 143 (lysine 143) interacts with NADP(+). Residue asparagine 166 participates in substrate binding. 2 residues coordinate NADP(+): valine 167 and lysine 175. The Proton acceptor role is filled by lysine 175. Residues glycine 177, histidine 184, phenylalanine 198–valine 201, arginine 211, and tyrosine 275 contribute to the substrate site.

Belongs to the NAD(P)-dependent epimerase/dehydratase family. HldD subfamily. As to quaternary structure, homopentamer. NADP(+) serves as cofactor.

The enzyme catalyses ADP-D-glycero-beta-D-manno-heptose = ADP-L-glycero-beta-D-manno-heptose. It functions in the pathway nucleotide-sugar biosynthesis; ADP-L-glycero-beta-D-manno-heptose biosynthesis; ADP-L-glycero-beta-D-manno-heptose from D-glycero-beta-D-manno-heptose 7-phosphate: step 4/4. Functionally, catalyzes the interconversion between ADP-D-glycero-beta-D-manno-heptose and ADP-L-glycero-beta-D-manno-heptose via an epimerization at carbon 6 of the heptose. This chain is ADP-L-glycero-D-manno-heptose-6-epimerase, found in Shewanella piezotolerans (strain WP3 / JCM 13877).